Here is a 127-residue protein sequence, read N- to C-terminus: Glycine cleavage system H protein (127 aa).

The region spanning 22–104 (EVVIGITHFA…YEGAWMVKVE (83 aa)) is the Lipoyl-binding domain. An N6-lipoyllysine modification is found at lysine 63.

This sequence belongs to the GcvH family. As to quaternary structure, the glycine cleavage system is composed of four proteins: P, T, L and H. (R)-lipoate is required as a cofactor.

In terms of biological role, the glycine cleavage system catalyzes the degradation of glycine. The H protein shuttles the methylamine group of glycine from the P protein to the T protein. Its function is as follows. Is also involved in protein lipoylation via its role as an octanoyl/lipoyl carrier protein intermediate. The protein is Glycine cleavage system H protein of Bacillus cereus (strain G9842).